The primary structure comprises 183 residues: Probable calcium-binding protein CML47 (183 aa).

2 consecutive EF-hand domains span residues 112 to 147 (MGKEIVKEAFRLFDENQDGFIDENELKHVLSLLGYD) and 149 to 183 (CTKMECRKMVKVYDENRDGKIDFYEFVKLIEKSFS). Residues aspartate 125, asparagine 127, aspartate 129, glutamate 136, aspartate 162, asparagine 164, aspartate 166, lysine 168, and glutamate 173 each contribute to the Ca(2+) site.

Functionally, potential calcium sensor. The sequence is that of Probable calcium-binding protein CML47 (CML47) from Arabidopsis thaliana (Mouse-ear cress).